The chain runs to 341 residues: Anthranilate phosphoribosyltransferase (341 aa).

5-phospho-alpha-D-ribose 1-diphosphate-binding positions include Gly79, 82-83 (GD), Thr87, 89-92 (NIST), 107-115 (KHGNRAVSS), and Ser119. Residue Gly79 participates in anthranilate binding. Ser91 contributes to the Mg(2+) binding site. Residue Asn110 coordinates anthranilate. Anthranilate is bound at residue Arg165. Mg(2+) is bound by residues Asp224 and Glu225.

Belongs to the anthranilate phosphoribosyltransferase family. Homodimer. Mg(2+) is required as a cofactor.

The catalysed reaction is N-(5-phospho-beta-D-ribosyl)anthranilate + diphosphate = 5-phospho-alpha-D-ribose 1-diphosphate + anthranilate. It functions in the pathway amino-acid biosynthesis; L-tryptophan biosynthesis; L-tryptophan from chorismate: step 2/5. Functionally, catalyzes the transfer of the phosphoribosyl group of 5-phosphorylribose-1-pyrophosphate (PRPP) to anthranilate to yield N-(5'-phosphoribosyl)-anthranilate (PRA). The chain is Anthranilate phosphoribosyltransferase from Bacillus mycoides (strain KBAB4) (Bacillus weihenstephanensis).